The chain runs to 460 residues: Amino acid transporter AVT6A (460 aa).

11 consecutive transmembrane segments (helical) span residues 45–65 (FSGAVFNLATTIIGAGIMALP), 66–86 (ATMKILGLGLGITMIVVMAFL), 120–140 (ILLQVAVLVNNIGVLIVYMII), 172–192 (AAILLITTLGVFAPLACFKRI), 199–219 (SALSVALAVVFLIITAGISIM), 238–258 (LTSFWNLFTVVPVLVTAFICH), 281–301 (ALMLCSSVYIMTSIFGFLLFG), 336–356 (LMLVFPIVFYPLRINIDGLLF), 371–391 (CLTAGLISVIFLGANFIPSIW), 394–414 (FQFTGATAAVCLGFIFPASII), and 427–447 (TTLAIFMIVLAVLSNAIAIYS).

It belongs to the amino acid/polyamine transporter 2 family. Amino acid/auxin permease (AAAP) (TC 2.A.18.6) subfamily.

It localises to the membrane. This Arabidopsis thaliana (Mouse-ear cress) protein is Amino acid transporter AVT6A.